A 314-amino-acid polypeptide reads, in one-letter code: Vomeronasal type-1 receptor 95 (314 aa).

Residues 1–18 (MNKDNTLYCSAYRIAFFS) are Extracellular-facing. The helical transmembrane segment at 19 to 39 (EIGIGISANSCLLLFHTFMFI) threads the bilayer. Residues 40–48 (RGHRPRLTD) are Cytoplasmic-facing. A helical transmembrane segment spans residues 49–69 (LPIGLVALIHLVMLLLAAYIT). At 70 to 88 (EDFFMSSGGWDDITCKLFI) the chain is on the extracellular side. Cys-84 and Cys-171 are joined by a disulfide. The helical transmembrane segment at 89-113 (FLHRFFRSLSVCDTCMLSVFQAIIL) threads the bilayer. Topologically, residues 114–133 (CPQSSHLAKFKLNSPHHLSC) are cytoplasmic. Residues 134-154 (FFIFMSIFYTSISSHILIAAI) form a helical membrane-spanning segment. The Extracellular portion of the chain corresponds to 155 to 186 (ATQNLTSVNLIYITKSCSFLPMSSSMQRTFST). A glycan (N-linked (GlcNAc...) asparagine) is linked at Asn-158. Residues 187-207 (LLAFRNVFLIGLMGLSTCYMA) form a helical membrane-spanning segment. Topologically, residues 208–235 (TLLCRHKTRSQQLQNSKLSPKATPEQRA) are cytoplasmic. A helical membrane pass occupies residues 236–256 (IWTILMLMSFFLIISTFDSIM). Over 257–268 (TYSRTIFQGNQS) the chain is Extracellular. N-linked (GlcNAc...) asparagine glycosylation occurs at Asn-266. A helical transmembrane segment spans residues 269–289 (LYCVQIPVAHGYAAFSPLLVL). Over 290-314 (NNEKRLTSLMISMYDRIVRLESLCS) the chain is Cytoplasmic.

It belongs to the G-protein coupled receptor 1 family.

The protein resides in the cell membrane. Its function is as follows. Putative pheromone receptor implicated in the regulation of social as well as reproductive behavior. This Rattus norvegicus (Rat) protein is Vomeronasal type-1 receptor 95 (Vom1r95).